Here is a 155-residue protein sequence, read N- to C-terminus: Protein-export protein SecB 1 (155 aa).

This sequence belongs to the SecB family. In terms of assembly, homotetramer, a dimer of dimers. One homotetramer interacts with 1 SecA dimer.

It localises to the cytoplasm. Its function is as follows. One of the proteins required for the normal export of preproteins out of the cell cytoplasm. It is a molecular chaperone that binds to a subset of precursor proteins, maintaining them in a translocation-competent state. It also specifically binds to its receptor SecA. The protein is Protein-export protein SecB 1 of Polaromonas naphthalenivorans (strain CJ2).